The primary structure comprises 504 residues: Maturase K (504 aa).

Belongs to the intron maturase 2 family. MatK subfamily.

It is found in the plastid. It localises to the chloroplast. Usually encoded in the trnK tRNA gene intron. Probably assists in splicing its own and other chloroplast group II introns. In Berzelia lanuginosa (Buttonbush), this protein is Maturase K.